A 393-amino-acid polypeptide reads, in one-letter code: NAD(P)H-quinone oxidoreductase subunit H, chloroplastic (393 aa).

The protein belongs to the complex I 49 kDa subunit family. As to quaternary structure, NDH is composed of at least 16 different subunits, 5 of which are encoded in the nucleus.

The protein localises to the plastid. The protein resides in the chloroplast thylakoid membrane. It catalyses the reaction a plastoquinone + NADH + (n+1) H(+)(in) = a plastoquinol + NAD(+) + n H(+)(out). It carries out the reaction a plastoquinone + NADPH + (n+1) H(+)(in) = a plastoquinol + NADP(+) + n H(+)(out). Functionally, NDH shuttles electrons from NAD(P)H:plastoquinone, via FMN and iron-sulfur (Fe-S) centers, to quinones in the photosynthetic chain and possibly in a chloroplast respiratory chain. The immediate electron acceptor for the enzyme in this species is believed to be plastoquinone. Couples the redox reaction to proton translocation, and thus conserves the redox energy in a proton gradient. This is NAD(P)H-quinone oxidoreductase subunit H, chloroplastic from Lotus japonicus (Lotus corniculatus var. japonicus).